Consider the following 299-residue polypeptide: ATP phosphoribosyltransferase (299 aa).

This sequence belongs to the ATP phosphoribosyltransferase family. Long subfamily. Mg(2+) is required as a cofactor.

It localises to the cytoplasm. It catalyses the reaction 1-(5-phospho-beta-D-ribosyl)-ATP + diphosphate = 5-phospho-alpha-D-ribose 1-diphosphate + ATP. It functions in the pathway amino-acid biosynthesis; L-histidine biosynthesis; L-histidine from 5-phospho-alpha-D-ribose 1-diphosphate: step 1/9. Its activity is regulated as follows. Feedback inhibited by histidine. In terms of biological role, catalyzes the condensation of ATP and 5-phosphoribose 1-diphosphate to form N'-(5'-phosphoribosyl)-ATP (PR-ATP). Has a crucial role in the pathway because the rate of histidine biosynthesis seems to be controlled primarily by regulation of HisG enzymatic activity. In Shewanella loihica (strain ATCC BAA-1088 / PV-4), this protein is ATP phosphoribosyltransferase.